The chain runs to 280 residues: 4-diphosphocytidyl-2-C-methyl-D-erythritol kinase (280 aa).

Lys9 is a catalytic residue. 93-103 lines the ATP pocket; it reads PVAAGLGGGSS. Asp135 is a catalytic residue.

Belongs to the GHMP kinase family. IspE subfamily.

The enzyme catalyses 4-CDP-2-C-methyl-D-erythritol + ATP = 4-CDP-2-C-methyl-D-erythritol 2-phosphate + ADP + H(+). Its pathway is isoprenoid biosynthesis; isopentenyl diphosphate biosynthesis via DXP pathway; isopentenyl diphosphate from 1-deoxy-D-xylulose 5-phosphate: step 3/6. Catalyzes the phosphorylation of the position 2 hydroxy group of 4-diphosphocytidyl-2C-methyl-D-erythritol. The protein is 4-diphosphocytidyl-2-C-methyl-D-erythritol kinase of Syntrophotalea carbinolica (strain DSM 2380 / NBRC 103641 / GraBd1) (Pelobacter carbinolicus).